The chain runs to 69 residues: MVGIIVKDGESIESALKRFKRDCANAGIMSEIKRREYFEKPSIKKKKAIESAKRKAEKKKRLFSKKDKA.

Positions 49–69 (IESAKRKAEKKKRLFSKKDKA) are disordered.

It belongs to the bacterial ribosomal protein bS21 family.

The chain is Small ribosomal subunit protein bS21 from Leptospira borgpetersenii serovar Hardjo-bovis (strain JB197).